The chain runs to 142 residues: NTF2-related export protein 2 (142 aa).

Residues 17–136 enclose the NTF2 domain; that stretch reads AAEEFVNIYY…WKIASDCFRF (120 aa).

In terms of assembly, associates with NXF1, NXF2, NXF3 and NXF5.

The protein resides in the nucleus. Its subcellular location is the cytoplasm. Functionally, regulator of protein export for NES-containing proteins. Also plays a role in mRNA nuclear export. This chain is NTF2-related export protein 2 (Nxt2), found in Mus musculus (Mouse).